We begin with the raw amino-acid sequence, 311 residues long: Pyrimidine-specific ribonucleoside hydrolase RihA (311 aa).

H240 is a catalytic residue.

This sequence belongs to the IUNH family. RihA subfamily.

In terms of biological role, hydrolyzes cytidine or uridine to ribose and cytosine or uracil, respectively. The protein is Pyrimidine-specific ribonucleoside hydrolase RihA of Salmonella enteritidis PT4 (strain P125109).